The following is a 610-amino-acid chain: DNA mismatch repair protein MutL (610 aa).

It belongs to the DNA mismatch repair MutL/HexB family.

This protein is involved in the repair of mismatches in DNA. It is required for dam-dependent methyl-directed DNA mismatch repair. May act as a 'molecular matchmaker', a protein that promotes the formation of a stable complex between two or more DNA-binding proteins in an ATP-dependent manner without itself being part of a final effector complex. In Rickettsia conorii (strain ATCC VR-613 / Malish 7), this protein is DNA mismatch repair protein MutL.